The chain runs to 363 residues: Chorismate synthase (363 aa).

NADP(+) contacts are provided by arginine 48 and arginine 54. Residues arginine 125–serine 127, asparagine 237–alanine 238, glycine 277, lysine 292–serine 296, and arginine 318 contribute to the FMN site.

This sequence belongs to the chorismate synthase family. As to quaternary structure, homotetramer. FMNH2 is required as a cofactor.

The catalysed reaction is 5-O-(1-carboxyvinyl)-3-phosphoshikimate = chorismate + phosphate. It participates in metabolic intermediate biosynthesis; chorismate biosynthesis; chorismate from D-erythrose 4-phosphate and phosphoenolpyruvate: step 7/7. Its function is as follows. Catalyzes the anti-1,4-elimination of the C-3 phosphate and the C-6 proR hydrogen from 5-enolpyruvylshikimate-3-phosphate (EPSP) to yield chorismate, which is the branch point compound that serves as the starting substrate for the three terminal pathways of aromatic amino acid biosynthesis. This reaction introduces a second double bond into the aromatic ring system. In Pseudomonas syringae pv. syringae (strain B728a), this protein is Chorismate synthase.